The following is a 648-amino-acid chain: RalA-binding protein 1 (648 aa).

Positions 1–158 (MTECFLPPSS…KKSKDLTAAD (158 aa)) are disordered. Thr2 carries the post-translational modification N-acetylthreonine. Polar residues predominate over residues 24-33 (LTRTPSSEEI). A phosphoserine mark is found at Ser29, Ser30, and Ser34. Phosphothreonine is present on Thr44. Residues Ser48 and Ser62 each carry the phosphoserine modification. The span at 52-68 (DVLHEPPDTVSDDDKDH) shows a compositional bias: basic and acidic residues. 69–74 (GKKKGK) contacts ATP. Over residues 69 to 79 (GKKKGKFKKKE) the composition is skewed to basic residues. Ser92 and Ser93 each carry phosphoserine. The segment covering 102 to 118 (KVKRSKGIHVFKKPSFS) has biased composition (basic residues). The segment at 102-119 (KVKRSKGIHVFKKPSFSK) is nuclear localization signal. Basic and acidic residues predominate over residues 119 to 155 (KKKEKDFKIKEKPKEEKHKEEKHKEEKHKEKKSKDLT). The interval 154 to 219 (LTAADVVKQW…PAVFRECVDY (66 aa)) is mediates association with membranes and could form transmembrane domains. One can recognise a Rho-GAP domain in the interval 192-380 (VPLVDAVERT…VVLKQVTRPL (189 aa)). Residues 403-499 (RRQEFLLNCL…LTEQEELLAM (97 aa)) are mediates interaction with RALA and RALB. 418–425 (GGIKDLSK) contributes to the ATP binding site. A phosphoserine mark is found at Ser461 and Ser463. The segment at 500 to 648 (EQFLRRQIAS…PSKDRKETPI (149 aa)) is mediates interaction with REPS1 and REPS2. Disordered stretches follow at residues 525–552 (QSRQ…EEEL) and 598–648 (RAKS…ETPI). Residues 536–552 (EEYSSDSESESEDEEEL) show a composition bias toward acidic residues. A compositionally biased stretch (basic and acidic residues) spans 629–648 (RVAKEQAKASPSKDRKETPI). Ser638 is subject to Phosphoserine.

In terms of assembly, interacts with the GTP-bound form of RALA (via effector domain); during mitosis, recruits RALBP1 to the mitochondrion where it promotes DNM1L phosphorylation and mitochondrial fission. Interacts with DNM1L; mediates its mitotic kinase cyclin B-CDK1-mediated phosphorylation during mitosis to promote mitochondrial fission. Interacts with the mitotic kinase cyclin B-CDK1 during mitosis. Interacts with the GTP-bound form of RALB (via effector domain). Interacts with REPS1; the interaction is direct and does not affect RALA-binding nor GTPase activator activity of RALBP1. Interacts with REPS2; the interaction is direct and does not affect RALA-binding nor GTPase activator activity of RALBP1. Interacts with EPN1, NUMB and TFAP2A during interphase and mitosis. Interacts with AP2M1; as part of the AP2 complex. Interacts with CDC42. Interacts with RAC1. In terms of processing, tyrosine-phosphorylated upon stimulation of cells with EGF. Post-translationally, may undergo proteolytic cleavage to give peptides which reassemble to form a transporter complex. As to expression, ubiquitous. The highest level of expression was observed in ovaries and skeletal muscle, whereas the lowest was found in spleen, liver and peripheral blood leukocytes.

It localises to the cell membrane. Its subcellular location is the cytoplasm. The protein resides in the cytosol. It is found in the cytoskeleton. The protein localises to the spindle pole. It localises to the nucleus. Its subcellular location is the mitochondrion. The catalysed reaction is an S-substituted glutathione(in) + ATP + H2O = an S-substituted glutathione(out) + ADP + phosphate + H(+). The enzyme catalyses ATP + H2O + xenobioticSide 1 = ADP + phosphate + xenobioticSide 2.. It catalyses the reaction leukotriene C4(in) + ATP + H2O = leukotriene C4(out) + ADP + phosphate + H(+). Its function is as follows. Multifunctional protein that functions as a downstream effector of RALA and RALB. As a GTPase-activating protein/GAP can inactivate CDC42 and RAC1 by stimulating their GTPase activity. As part of the Ral signaling pathway, may also regulate ligand-dependent EGF and insulin receptors-mediated endocytosis. During mitosis, may act as a scaffold protein in the phosphorylation of EPSIN/EPN1 by the mitotic kinase cyclin B-CDK1, preventing endocytosis during that phase of the cell cycle. During mitosis, also controls mitochondrial fission as an effector of RALA. Recruited to mitochondrion by RALA, acts as a scaffold to foster the mitotic kinase cyclin B-CDK1-mediated phosphorylation and activation of DNM1L. In terms of biological role, could also function as a primary ATP-dependent active transporter for glutathione conjugates of electrophiles. May also actively catalyze the efflux of a wide range of substrates including xenobiotics like doxorubicin (DOX) contributing to cell multidrug resistance. The chain is RalA-binding protein 1 from Mus musculus (Mouse).